Here is a 1559-residue protein sequence, read N- to C-terminus: Bile pigment transporter 1 (1559 aa).

At 1-29 the chain is on the vacuolar side; sequence MSSLEVVDGCPYGYRPYPDSGTNALNPCF. A helical transmembrane segment spans residues 30-50; it reads ISVISAWQAVFFLLIGSYQLW. Topologically, residues 51-84 are cytoplasmic; it reads KLYKNNKVPPRFKNFPTLPSKINSRHLTHLTNVC. A helical transmembrane segment spans residues 85-105; that stretch reads FQSTLIICELALVSQSSDRVY. The Vacuolar segment spans residues 106 to 110; sequence PFILK. Residues 111–127 traverse the membrane as a helical segment; sequence KALYLNLLFNLGISLPT. The Cytoplasmic segment spans residues 128–139; that stretch reads QYLAYFKSTFSM. Residues 140–160 form a helical membrane-spanning segment; it reads GNQLFYYMFQILLQLFLILQR. The Vacuolar segment spans residues 161–178; it reads YYHGSSNERLTVISGQTA. Residues 179–199 traverse the membrane as a helical segment; sequence MILEVLLLFNSVAIFIYDLCI. The Cytoplasmic segment spans residues 200 to 283; sequence FEPINELSEY…WLNRNSLWRA (84 aa). A helical membrane pass occupies residues 284-304; the sequence is IWKSFGRTISVAMLYETTSDL. In terms of domain architecture, ABC transmembrane type-1 1 spans 292-578; the sequence is ISVAMLYETT…VPSMINTIIE (287 aa). The Vacuolar segment spans residues 305–333; that stretch reads LSVVQPQFLRIFIDGLNPETSSKYPPLNG. Residues 334–354 form a helical membrane-spanning segment; sequence VFIALTLFVISVVSVFLTNQF. The Cytoplasmic segment spans residues 355–410; it reads YIGIFEAGLGIRGSLASLVYQKSLRLTLAERNEKSTGDILNLMSVDVLRIQRFFEN. A helical membrane pass occupies residues 411-431; the sequence is AQTIIGAPIQIIVVLTSLYWL. Over 432 to 434 the chain is Vacuolar; the sequence is LGK. A helical membrane pass occupies residues 435–455; the sequence is AVIGGLVTMAIMMPINAFLSR. The Cytoplasmic portion of the chain corresponds to 456–518; it reads KVKKLSKTQM…NFRKIGIVSN (63 aa). Residues 519–539 traverse the membrane as a helical segment; the sequence is LIYFAWNCVPLMVTCSTFGLF. Topologically, residues 540-560 are vacuolar; that stretch reads SLFSDSPLSPAIVFPSLSLFN. A helical membrane pass occupies residues 561–581; the sequence is ILNSAIYSVPSMINTIIETSV. Residues 582-972 lie on the Cytoplasmic side of the membrane; that stretch reads SMERLKSFLL…VKTKIYLAYI (391 aa). The region spanning 639–871 is the ABC transporter 1 domain; it reads LRTDEESIIG…KNNTSKLKKL (233 aa). Phosphoserine is present on Ser-645. 672–679 provides a ligand contact to ATP; it reads GRVGAGKS. The segment at 877-899 is disordered; sequence SPIDNGNESDVQTEHRSESEVDE. Ser-885 carries the post-translational modification Phosphoserine. Thr-889 carries the phosphothreonine modification. 2 positions are modified to phosphoserine: Ser-893 and Ser-895. Position 916 is a phosphothreonine (Thr-916). Ser-927 and Ser-931 each carry phosphoserine. Phosphothreonine is present on Thr-934. Residues 973–993 traverse the membrane as a helical segment; it reads KACGVLGVVLFFLFMILTRVF. Residues 980–1265 enclose the ABC transmembrane type-1 2 domain; that stretch reads VVLFFLFMIL…IVRTTVTIET (286 aa). The Vacuolar segment spans residues 994 to 1030; sequence DLAENFWLKYWSESNEKNGSNERVWMFVGVYSLIGVA. A glycan (N-linked (GlcNAc...) asparagine) is linked at Asn-1011. Residues 1031–1052 traverse the membrane as a helical segment; that stretch reads SAAFNNLRSIMMLLYCSIRGSK. At 1053–1095 the chain is on the cytoplasmic side; it reads KLHESMAKSVIRSPMTFFETTPVGRIINRFSSDMDAVDSNLQY. The chain crosses the membrane as a helical span at residues 1096–1116; sequence IFSFFFKSILTYLVTVILVGY. Residue Asn-1117 is a topological domain, vacuolar. A helical membrane pass occupies residues 1118-1138; it reads MPWFLVFNMFLVVIYIYYQTF. Residues 1139-1209 are Cytoplasmic-facing; the sequence is YIVLSRELKR…STNRWLSVRL (71 aa). Residues 1210–1230 traverse the membrane as a helical segment; the sequence is QTIGATIVLATAILALATMNT. Residues 1231 to 1235 are Vacuolar-facing; the sequence is KRQLS. The helical transmembrane segment at 1236–1256 threads the bilayer; sequence SGMVGLLMSYSLEVTGSLTWI. At 1257–1559 the chain is on the cytoplasmic side; that stretch reads VRTTVTIETN…SLCEKGGYLK (303 aa). The ABC transporter 2 domain maps to 1302–1553; sequence IEFKNYSTKY…KTSIFYSLCE (252 aa). 1336–1343 contacts ATP; the sequence is GRTGAGKS. Residues 1420-1433 are compositionally biased toward basic and acidic residues; the sequence is HLEKMLHSKPRGDD. The interval 1420-1439 is disordered; the sequence is HLEKMLHSKPRGDDSNEEDG.

Belongs to the ABC transporter superfamily.

It is found in the vacuole membrane. Cooperates for the ATP-dependent vacuolar transport of bilirubin and glutathione conjugates. This chain is Bile pigment transporter 1 (BPT1), found in Saccharomyces cerevisiae (strain ATCC 204508 / S288c) (Baker's yeast).